Reading from the N-terminus, the 258-residue chain is UPF0246 protein YaaA (258 aa).

This sequence belongs to the UPF0246 family.

In Escherichia coli (strain SE11), this protein is UPF0246 protein YaaA.